The chain runs to 142 residues: Large ribosomal subunit protein uL13 (142 aa).

The protein belongs to the universal ribosomal protein uL13 family. Part of the 50S ribosomal subunit.

Its function is as follows. This protein is one of the early assembly proteins of the 50S ribosomal subunit, although it is not seen to bind rRNA by itself. It is important during the early stages of 50S assembly. The protein is Large ribosomal subunit protein uL13 of Erwinia tasmaniensis (strain DSM 17950 / CFBP 7177 / CIP 109463 / NCPPB 4357 / Et1/99).